The sequence spans 124 residues: Fluoride-specific ion channel FluC (124 aa).

A run of 4 helical transmembrane segments spans residues 4–24 (FVLVATGGIFGSLARYVLSGV), 35–55 (YGTVLVNLLGSLLFGLVWGIL), 67–87 (LLLLTGFMGSLTTFSTLTYEG), and 100–120 (ALYIVGQTVAGIMLVWFGAGL). 2 residues coordinate Na(+): G75 and T78.

It belongs to the fluoride channel Fluc/FEX (TC 1.A.43) family.

It localises to the cell inner membrane. It catalyses the reaction fluoride(in) = fluoride(out). Na(+) is not transported, but it plays an essential structural role and its presence is essential for fluoride channel function. In terms of biological role, fluoride-specific ion channel. Important for reducing fluoride concentration in the cell, thus reducing its toxicity. This Nitratidesulfovibrio vulgaris (strain ATCC 29579 / DSM 644 / CCUG 34227 / NCIMB 8303 / VKM B-1760 / Hildenborough) (Desulfovibrio vulgaris) protein is Fluoride-specific ion channel FluC.